A 324-amino-acid polypeptide reads, in one-letter code: Delta-aminolevulinic acid dehydratase (324 aa).

Residues Cys120, Cys122, and Cys130 each coordinate Zn(2+). Lys195 acts as the Schiff-base intermediate with substrate in catalysis. Arg205 and Arg216 together coordinate 5-aminolevulinate. Glu232 lines the Mg(2+) pocket. Residue Lys247 is the Schiff-base intermediate with substrate of the active site. Residues Ser273 and Tyr312 each coordinate 5-aminolevulinate.

This sequence belongs to the ALAD family. In terms of assembly, homooctamer. Requires Zn(2+) as cofactor.

The enzyme catalyses 2 5-aminolevulinate = porphobilinogen + 2 H2O + H(+). It functions in the pathway porphyrin-containing compound metabolism; protoporphyrin-IX biosynthesis; coproporphyrinogen-III from 5-aminolevulinate: step 1/4. With respect to regulation, allosteric enzyme. Stimulated by magnesium ions. Functionally, catalyzes an early step in the biosynthesis of tetrapyrroles. Binds two molecules of 5-aminolevulinate per subunit, each at a distinct site, and catalyzes their condensation to form porphobilinogen. This Escherichia coli (strain K12) protein is Delta-aminolevulinic acid dehydratase (hemB).